Reading from the N-terminus, the 565-residue chain is MSEQKLAVNEYLKTDSDYLRGTIQQGLNTAVTGAFSEGDQQLIKFHGFYQQDDRDLRNERKEQKLEPLYSFMLRARVAGGVCSPEQWLAVDKIASNLTSANSIRLTTRQTFQYHGIPKRNLKTIIQDLDREALDSIAACGDVNRNVMCNPNPVESKLHQQAYAYAKQLSDNMLPHTKAYAEIWLDNEKLVTTEGEEVEPVYGQTYLPRKFKMAVAVPPDNDVDVYTNDLGFIAVAEGDELVGFNMVAGGGMGSTHGEVSTFPRLADDFGYIKAEDSLKFAEAVMTIQRDWGNRENRKLSRLKYTIVKHGFETFKAEIEARTGIKFEPRRDVVIGDRGDRYGWKQGVDDNWHLTLFIEGGRVKDLPGQPLQTGLREIAKIHRGDFRMTSNQNMIIAGVASADKEQIEGLARQYGLLGKLITETRGHSIACVALPTCALAMAEAERYFPDFLTKVEALQQKHGFLDQGIVIRMTGCPNGCARPFAAEIGLVGKAPGRYNLYLGASFEGTRLNKLYRENIQEAEILDQLDTLFAQYASQRQAGETFGNYTVRSGVVAAVNDAAKDFHG.

[4Fe-4S] cluster-binding residues include C429, C435, C474, and C478. Residue C478 participates in siroheme binding.

The protein belongs to the nitrite and sulfite reductase 4Fe-4S domain family. In terms of assembly, alpha(8)-beta(8). The alpha component is a flavoprotein, the beta component is a hemoprotein. It depends on siroheme as a cofactor. [4Fe-4S] cluster is required as a cofactor.

It carries out the reaction hydrogen sulfide + 3 NADP(+) + 3 H2O = sulfite + 3 NADPH + 4 H(+). The protein operates within sulfur metabolism; hydrogen sulfide biosynthesis; hydrogen sulfide from sulfite (NADPH route): step 1/1. Its function is as follows. Component of the sulfite reductase complex that catalyzes the 6-electron reduction of sulfite to sulfide. This is one of several activities required for the biosynthesis of L-cysteine from sulfate. This is Sulfite reductase [NADPH] hemoprotein beta-component from Shewanella halifaxensis (strain HAW-EB4).